The following is a 179-amino-acid chain: Probable inosine/xanthosine triphosphatase (179 aa).

13–18 (STNPVK) lines the substrate pocket. Residue Q70 participates in Mg(2+) binding.

Belongs to the YjjX NTPase family. As to quaternary structure, homodimer. It depends on Mg(2+) as a cofactor. The cofactor is Mn(2+).

The enzyme catalyses XTP + H2O = XDP + phosphate + H(+). It carries out the reaction ITP + H2O = IDP + phosphate + H(+). Its function is as follows. Phosphatase that hydrolyzes non-canonical purine nucleotides such as XTP and ITP to their respective diphosphate derivatives. Probably excludes non-canonical purines from DNA/RNA precursor pool, thus preventing their incorporation into DNA/RNA and avoiding chromosomal lesions. In Methanocaldococcus jannaschii (strain ATCC 43067 / DSM 2661 / JAL-1 / JCM 10045 / NBRC 100440) (Methanococcus jannaschii), this protein is Probable inosine/xanthosine triphosphatase.